The sequence spans 399 residues: S-adenosylmethionine synthase (399 aa).

His-17 is an ATP binding site. Residue Asp-19 participates in Mg(2+) binding. Glu-52 provides a ligand contact to K(+). Residues Glu-65 and Gln-109 each contribute to the L-methionine site. Positions 109–119 are flexible loop; it reads QSADIAQGVDA. ATP-binding positions include 177–179, 243–244, Asp-252, 258–259, Ala-275, and Lys-279; these read DSK, KF, and RK. Asp-252 is a binding site for L-methionine. Lys-283 is a binding site for L-methionine.

Belongs to the AdoMet synthase family. As to quaternary structure, homotetramer; dimer of dimers. Mg(2+) is required as a cofactor. Requires K(+) as cofactor.

The protein resides in the cytoplasm. The enzyme catalyses L-methionine + ATP + H2O = S-adenosyl-L-methionine + phosphate + diphosphate. Its pathway is amino-acid biosynthesis; S-adenosyl-L-methionine biosynthesis; S-adenosyl-L-methionine from L-methionine: step 1/1. Its function is as follows. Catalyzes the formation of S-adenosylmethionine (AdoMet) from methionine and ATP. The overall synthetic reaction is composed of two sequential steps, AdoMet formation and the subsequent tripolyphosphate hydrolysis which occurs prior to release of AdoMet from the enzyme. This chain is S-adenosylmethionine synthase, found in Bradyrhizobium sp. (strain BTAi1 / ATCC BAA-1182).